The chain runs to 393 residues: uncharacterized protein (393 aa).

The B box-type zinc finger occupies 6–47; it reads KYDNKCAIHKEHKIKMICATCKDVVCNECILLDHNGHKFGRI. 4 residues coordinate Zn(2+): Cys11, His14, Cys34, and His39.

This is an uncharacterized protein from Dictyostelium discoideum (Social amoeba).